The primary structure comprises 152 residues: Endoribonuclease YbeY (152 aa).

Residues H114, H118, and H124 each contribute to the Zn(2+) site.

Belongs to the endoribonuclease YbeY family. It depends on Zn(2+) as a cofactor.

It localises to the cytoplasm. Functionally, single strand-specific metallo-endoribonuclease involved in late-stage 70S ribosome quality control and in maturation of the 3' terminus of the 16S rRNA. In Wigglesworthia glossinidia brevipalpis, this protein is Endoribonuclease YbeY.